The following is a 417-amino-acid chain: Transmembrane protease serine 11D (417 aa).

Topologically, residues 1-17 are cytoplasmic; that stretch reads MYRPRSMVSPSRFFNPF. A helical; Signal-anchor for type II membrane protein membrane pass occupies residues 18-38; sequence MVALIVIITVGLLAMTAGLLI. At 39-417 the chain is on the extracellular side; it reads HFLAFDKRAY…RNWIRQQTGI (379 aa). Positions 46–162 constitute an SEA domain; it reads RAYFYHSNFH…SNGITSLTDQ (117 aa). 4 cysteine pairs are disulfide-bonded: Cys-172/Cys-291, Cys-211/Cys-227, Cys-336/Cys-352, and Cys-363/Cys-392. The Peptidase S1 domain occupies 186 to 416; it reads IIGGTQAETG…YRNWIRQQTG (231 aa). Active-site charge relay system residues include His-226 and Asp-271. The active-site Charge relay system is the Ser-367.

Belongs to the peptidase S1 family. In terms of assembly, monomer. As to expression, isoform 1 and isoform 2 are expressed in the esophagus, tongue and trachea. Isoform 2 is also highly expressed in the adrenal cortex and heart.

The protein localises to the cell membrane. It is found in the secreted. Its function is as follows. May play some biological role in the host defense system on the mucous membrane independently of or in cooperation with other substances in airway mucous or bronchial secretions. Plays a role in the proteolytic processing of ACE2. Preferentially cleaves the C-terminal side of arginine residues at the P1 position of certain peptides. Isoform 2 may play a key role in regulating adrenal proliferation by specifically cleaving N-POMC. This chain is Transmembrane protease serine 11D (Tmprss11d), found in Rattus norvegicus (Rat).